A 279-amino-acid polypeptide reads, in one-letter code: Putative pyruvate, phosphate dikinase regulatory protein (279 aa).

ADP is bound at residue 153–160; it reads GVSRTSKT.

The protein belongs to the pyruvate, phosphate/water dikinase regulatory protein family. PDRP subfamily.

It carries out the reaction N(tele)-phospho-L-histidyl/L-threonyl-[pyruvate, phosphate dikinase] + ADP = N(tele)-phospho-L-histidyl/O-phospho-L-threonyl-[pyruvate, phosphate dikinase] + AMP + H(+). The enzyme catalyses N(tele)-phospho-L-histidyl/O-phospho-L-threonyl-[pyruvate, phosphate dikinase] + phosphate + H(+) = N(tele)-phospho-L-histidyl/L-threonyl-[pyruvate, phosphate dikinase] + diphosphate. Its function is as follows. Bifunctional serine/threonine kinase and phosphorylase involved in the regulation of the pyruvate, phosphate dikinase (PPDK) by catalyzing its phosphorylation/dephosphorylation. The sequence is that of Putative pyruvate, phosphate dikinase regulatory protein from Bradyrhizobium sp. (strain ORS 278).